Here is a 194-residue protein sequence, read N- to C-terminus: Large ribosomal subunit protein bL27c (194 aa).

A chloroplast-targeting transit peptide spans 1–57 (MAVTTSMSFNLMASFRGMSLSSSSSSSFFKGEFGPSSLRLPNKSPLSVSPFPLTIES). Residues 57–76 (SAHKKGAGSTKNGRDSKGQR) form a disordered region.

Component of the chloroplast large ribosomal subunit (LSU). Mature 70S chloroplast ribosomes of higher plants consist of a small (30S) and a large (50S) subunit. The 30S small subunit contains 1 molecule of ribosomal RNA (16S rRNA) and 24 different proteins. The 50S large subunit contains 3 rRNA molecules (23S, 5S and 4.5S rRNA) and 33 different proteins.

It is found in the plastid. The protein resides in the chloroplast. Component of the chloroplast ribosome (chloro-ribosome), a dedicated translation machinery responsible for the synthesis of chloroplast genome-encoded proteins, including proteins of the transcription and translation machinery and components of the photosynthetic apparatus. In Spinacia oleracea (Spinach), this protein is Large ribosomal subunit protein bL27c (RPL27).